The following is a 785-amino-acid chain: Proprotein convertase subtilisin/kexin type 7 (785 aa).

Positions 1-37 are cleaved as a signal peptide; the sequence is MPKGRQKVPHLDAPLGLPTCLWLELAGLFLLVPWVMG. A propeptide spanning residues 38 to 141 is cleaved from the precursor; that stretch reads LAGTGGPDGQ…EQRLLRRAKR (104 aa). Topologically, residues 142 to 667 are extracellular; it reads SVHFNDPKYP…YTITPNTLKT (526 aa). In terms of domain architecture, Peptidase S8 spans 153–473; that stretch reads QWHLNNRRSP…FGLLNAWRLV (321 aa). N-linked (GlcNAc...) asparagine glycosylation is found at asparagine 167 and asparagine 175. The Charge relay system role is filled by aspartate 187. Residues 197-219 form a disordered region; the sequence is IAPNYSPEGSYDLNSNDPDPMPH. Histidine 228 (charge relay system) is an active-site residue. N-linked (GlcNAc...) asparagine glycosylation is present at asparagine 241. Serine 406 (charge relay system) is an active-site residue. Residues 481–618 enclose the P/Homo B domain; that stretch reads SVPYLASYVS…QLTLYGSVWS (138 aa). N-linked (GlcNAc...) asparagine glycosylation is present at asparagine 511. Residues 668 to 688 traverse the membrane as a helical segment; that stretch reads LVLVGCFTVFWTVYYMLEVYL. Residues 689-785 lie on the Cytoplasmic side of the membrane; sequence SQRNVASNQV…VPHGKEEQIC (97 aa). The interval 700–751 is disordered; that stretch reads RSGPCHWPHRSRKAKEEGTELESVPLCSSKDPDEVETESRGPPTTSDLLAPD.

It belongs to the peptidase S8 family. Requires Ca(2+) as cofactor. Post-translationally, cysteine residues in the cytoplasmic tail are probably palmitoylated. In terms of processing, N-glycosylated. Expressed in spleen, thymus, prostate, testis, ovary, small intestine, colon and peripheral blood leukocyte.

It localises to the golgi apparatus. Its subcellular location is the trans-Golgi network membrane. With respect to regulation, inhibited by zinc and copper. Its function is as follows. Serine endoprotease that processes various proproteins by cleavage at paired basic amino acids, recognizing the RXXX[KR]R consensus motif. Likely functions in the constitutive secretory pathway. The sequence is that of Proprotein convertase subtilisin/kexin type 7 (PCSK7) from Homo sapiens (Human).